A 593-amino-acid chain; its full sequence is Dolichyl-phosphooligosaccharide-protein glycotransferase 2 (593 aa).

Residues 1–12 (MTPVGMDRKSLS) are Cytoplasmic-facing. The helical transmembrane segment at 13-33 (LLILIVLLGLCIRLQNFGEIF) threads the bilayer. The Extracellular portion of the chain corresponds to 34 to 98 (DSRIYYYGYD…GLFLGFWASE (65 aa)). The DXD motif 1 motif lies at 41-43 (GYD). A Mn(2+)-binding site is contributed by Asp43. The chain crosses the membrane as a helical span at residues 99–119 (IFAVVFPVIIGVLCIVLVYLI). The Cytoplasmic segment spans residues 120 to 128 (SLEVLRNEK). Residues 129–149 (FALISAFIFSVCPVTVWKSLL) form a helical membrane-spanning segment. Residues 150–154 (GKADH) lie on the Extracellular side of the membrane. Asp153 provides a ligand contact to Mn(2+). The DXD motif 2 motif lies at 153-155 (DHH). His154 contributes to the a glycophospholipid binding site. A Mn(2+)-binding site is contributed by His155. A helical transmembrane segment spans residues 155–175 (HIWVVFLLLLSIWLVTKPGLL). Topologically, residues 176 to 180 (KLLSG) are cytoplasmic. A helical transmembrane segment spans residues 181–201 (IPMLLMALSWLGAPIYAALLA). Residues 202–229 (VSSLFQFNEKEVRIVGISNLIPVLSSIQ) are Extracellular-facing. A helical transmembrane segment spans residues 230 to 250 (NLFLGFSFLAIAVFLLVGSFV). Topologically, residues 251 to 265 (KRFERRFRYAIVYYL) are cytoplasmic. A helical transmembrane segment spans residues 266-286 (CICSVALLSAYLMPVGWLGFV). Residues 287 to 310 (KSGISYVLGTDIYLPTIREARSFQ) lie on the Extracellular side of the membrane. The TIXE motif motif lies at 302–305 (TIRE). The chain crosses the membrane as a helical span at residues 311 to 331 (ILGVISSAGYLFFVLAIPALF). Met332 is a topological domain (cytoplasmic). A helical transmembrane segment spans residues 333–353 (LRNGFLKVFFVLSFLISILQL). Residue Arg354 is a topological domain, extracellular. A glycophospholipid is bound at residue Arg354. A helical membrane pass occupies residues 355-375 (FVEVLAFPVAILASYTICQIL). Topologically, residues 376–411 (ERVDYPVFRKEEEGESKRRGRKEKKKAVEIRKKDHA) are cytoplasmic. Residues 412-432 (TVIAFLLFLALPCFANSLAPV) form a helical membrane-spanning segment. The Extracellular portion of the chain corresponds to 433–593 (EMTMDWKEAL…FGTVKIFEVK (161 aa)). Residues 468 to 470 (WWD) form an interacts with target acceptor peptide in protein substrate region. Positions 468 to 472 (WWDYG) match the WWDYG motif motif. Residues 524–539 (ELTVKPETNKTKFIPI) carry the DKi motif motif.

It belongs to the STT3 family. Mn(2+) is required as a cofactor. Requires Mg(2+) as cofactor. Zn(2+) serves as cofactor.

It localises to the cell membrane. It catalyses the reaction an archaeal dolichyl phosphooligosaccharide + [protein]-L-asparagine = an archaeal dolichyl phosphate + a glycoprotein with the oligosaccharide chain attached by N-beta-D-glycosyl linkage to a protein L-asparagine.. It functions in the pathway protein modification; protein glycosylation. Functionally, oligosaccharyl transferase (OST) that catalyzes the initial transfer of a defined glycan (a GalNAc-linked heptasaccharide composed of 4 Hex, 3 dHex and a sulfate for A.fulgidus AglB-S) from the lipid carrier dolichol-monophosphate to an asparagine residue within an Asn-X-Ser/Thr consensus motif in nascent polypeptide chains, the first step in protein N-glycosylation. The chain is Dolichyl-phosphooligosaccharide-protein glycotransferase 2 (aglB2) from Archaeoglobus fulgidus (strain ATCC 49558 / DSM 4304 / JCM 9628 / NBRC 100126 / VC-16).